We begin with the raw amino-acid sequence, 924 residues long: Isoleucine--tRNA ligase (924 aa).

The short motif at 57 to 67 (PYANGDIHMGH) is the 'HIGH' region element. Residue Glu-552 coordinates L-isoleucyl-5'-AMP. The short motif at 593-597 (KMSKS) is the 'KMSKS' region element. Lys-596 contributes to the ATP binding site. Residues Cys-891, Cys-894, Cys-911, and Cys-914 each coordinate Zn(2+).

It belongs to the class-I aminoacyl-tRNA synthetase family. IleS type 1 subfamily. As to quaternary structure, monomer. Requires Zn(2+) as cofactor.

It is found in the cytoplasm. It catalyses the reaction tRNA(Ile) + L-isoleucine + ATP = L-isoleucyl-tRNA(Ile) + AMP + diphosphate. Its function is as follows. Catalyzes the attachment of isoleucine to tRNA(Ile). As IleRS can inadvertently accommodate and process structurally similar amino acids such as valine, to avoid such errors it has two additional distinct tRNA(Ile)-dependent editing activities. One activity is designated as 'pretransfer' editing and involves the hydrolysis of activated Val-AMP. The other activity is designated 'posttransfer' editing and involves deacylation of mischarged Val-tRNA(Ile). The sequence is that of Isoleucine--tRNA ligase from Geobacillus thermodenitrificans (strain NG80-2).